We begin with the raw amino-acid sequence, 341 residues long: Methionine import ATP-binding protein MetN 2 (341 aa).

Positions 2 to 241 (IELKEVVKEY…PQHTVTKRFV (240 aa)) constitute an ABC transporter domain. Residue 38–45 (GFSGAGKS) coordinates ATP.

It belongs to the ABC transporter superfamily. Methionine importer (TC 3.A.1.24) family. In terms of assembly, the complex is composed of two ATP-binding proteins (MetN), two transmembrane proteins (MetI) and a solute-binding protein (MetQ).

Its subcellular location is the cell membrane. The enzyme catalyses L-methionine(out) + ATP + H2O = L-methionine(in) + ADP + phosphate + H(+). It carries out the reaction D-methionine(out) + ATP + H2O = D-methionine(in) + ADP + phosphate + H(+). Its function is as follows. Part of the ABC transporter complex MetNIQ involved in methionine import. Responsible for energy coupling to the transport system. In Staphylococcus aureus (strain bovine RF122 / ET3-1), this protein is Methionine import ATP-binding protein MetN 2.